The following is a 481-amino-acid chain: Acyl-CoA ligase cnsG (481 aa).

The PTS2-type peroxisomal targeting signal signature appears at 3–11; it reads SPQLPPSMK. ATP contacts are provided by residues 124–132, 263–268, Asp-353, and Arg-368; these read KSGTTGNPK and NGYGMT. Thr-268 serves as a coordination point for substrate. Residues 376–378 and 446–448 contribute to the CoA site; these read GGL and AIF. Lys-466 is an ATP binding site.

It belongs to the ATP-dependent AMP-binding enzyme family.

It participates in alkaloid biosynthesis. Its function is as follows. Acyl-CoA ligase; part of the gene cluster that mediates the biosynthesis of communesins, a prominent class of indole alkaloids with great potential as pharmaceuticals. Communesins are biosynthesized by the coupling of tryptamine and aurantioclavine, two building blocks derived from L-tryptophan. The L-tryptophan decarboxylase cnsB converts L-tryptophan to tryptamine, whereas the tryptophan dimethylallyltransferase cnsF converts L-tryptophan to 4-dimethylallyl tryptophan which is further transformed to aurantioclavine by the aurantioclavine synthase cnsA, probably aided by the catalase cnsD. The cytochrome P450 monooxygenase cnsC catalyzes the heterodimeric coupling between the two different indole moieties, tryptamine and aurantioclavine, to construct vicinal quaternary stereocenters and yield the heptacyclic communesin scaffold. The O-methyltransferase cnsE then methylates the communesin scaffold to produce communesin K, the simplest characterized communesin that contains the heptacyclic core. The dioxygenase cnsJ converts communesin K into communesin I. Acylation to introduce the hexadienyl group at position N16 of communesin I by the acyltransferase cnsK leads to the production of communesin B. The hexadienyl group is produced by the highly reducing polyketide synthase cnsI, before being hydrolytically removed from cnsI by the serine hydrolase cnsH, converted into hexadienyl-CoA by the CoA ligase cnsG, and then transferred to communesin I by cnsK. Surprisingly, cnsK may also be a promiscuous acyltransferase that can tolerate a range of acyl groups, including acetyl-, propionyl-, and butyryl-CoA, which lead to communesins A, G and H respectively. The roles of the alpha-ketoglutarate-dependent dioxygenases cnsM and cnsP have still to be determined. The chain is Acyl-CoA ligase cnsG from Penicillium expansum (Blue mold rot fungus).